The primary structure comprises 60 residues: Large ribosomal subunit protein bL32 (60 aa).

Residues 1–28 form a disordered region; the sequence is MAVQQNKKSRSARDMRRSHDALEASTLS. A compositionally biased stretch (basic and acidic residues) spans 11 to 22; sequence SARDMRRSHDAL.

Belongs to the bacterial ribosomal protein bL32 family.

This chain is Large ribosomal subunit protein bL32, found in Pseudomonas savastanoi pv. phaseolicola (strain 1448A / Race 6) (Pseudomonas syringae pv. phaseolicola (strain 1448A / Race 6)).